The chain runs to 1179 residues: Integrin alpha-1 (1179 aa).

The signal sequence occupies residues 1-28 (MAPRPRARPGVAVACCWLLTVVLRCCVS). Residues 29 to 1141 (FNVDVKNSMT…SKDGLPGRVP (1113 aa)) lie on the Extracellular side of the membrane. The stretch at 30-91 (NVDVKNSMTF…CPVGRGESLP (62 aa)) is one FG-GAP 1 repeat. A glycan (N-linked (GlcNAc...) asparagine) is linked at N74. The cysteines at positions 82 and 92 are disulfide-linked. N100, N105, N112, N217, N317, N341, N402, N418, and N460 each carry an N-linked (GlcNAc...) asparagine glycan. The stretch at 101–160 (TSIPNVTEVKENMTFGSTLVTNPNGGFLACGPLYAYRCGHLHYTTGICSDVSPTFQVVNS) is one FG-GAP 2 repeat. Positions 161 to 360 (IAPVQECSTQ…IVKTLGERIF (200 aa)) constitute a VWFA domain. An FG-GAP 3 repeat occupies 365–417 (TADQSAASFEMEMSQTGFSAHYSQDWVMLGAVGAYDWNGTVVMQKASQIIIPR). FG-GAP repeat units follow at residues 422 to 475 (NVES…DGNI), 476 to 538 (KILQ…RFEY), 557 to 615 (SCTT…TIRK), and 619 to 679 (QRIP…FEPN). Ca(2+)-binding residues include D498, D500, D502, and D506. N532 is a glycosylation site (N-linked (GlcNAc...) asparagine). 8 residues coordinate Ca(2+): D580, N582, D584, D588, D642, N644, D646, and D650. C688 and C697 form a disulfide bridge. N699, N748, and N780 each carry an N-linked (GlcNAc...) asparagine glycan. A disulfide bond links C703 and C756. The cysteines at positions 808 and 814 are disulfide-linked. N-linked (GlcNAc...) asparagine glycosylation is found at N840, N883, N908, N915, N939, N966, N974, and N1008. C878 and C886 are joined by a disulfide. 2 disulfide bridges follow: C1030/C1062 and C1065/C1072. N-linked (GlcNAc...) asparagine glycosylation is found at N1073, N1083, N1102, and N1113. The chain crosses the membrane as a helical span at residues 1142 to 1164 (LWVILLSAFAGLLLLMLLILALW). Topologically, residues 1165–1179 (KIGFFKRPLKKKMEK) are cytoplasmic. Residues 1167–1171 (GFFKR) carry the GFFKR motif motif.

Belongs to the integrin alpha chain family. Heterodimer of an alpha and a beta subunit. Alpha-1 associates with beta-1. Interacts with RAB21. Interacts (via cytoplasmic domain) with PTPN2; activates PTPN2 phosphatase activity towards EGFR and negatively regulates EGF signaling.

The protein resides in the membrane. Functionally, integrin alpha-1/beta-1 is a receptor for laminin and collagen. It recognizes the proline-hydroxylated sequence G-F-P-G-E-R in collagen. Involved in anchorage-dependent, negative regulation of EGF-stimulated cell growth. This chain is Integrin alpha-1 (ITGA1), found in Homo sapiens (Human).